We begin with the raw amino-acid sequence, 169 residues long: Centrosomal protein 20 (169 aa).

The segment at 1–104 (MATVGDLKAV…VVEDLNSQSV (104 aa)) is necessary and sufficient for homooligomerization and localization to centrosomes and pericentriolar satellites. In terms of domain architecture, LisH spans 49–81 (ENLLINELIREYLAFNKYSYTSSVLTAETGLSE). Positions 135–169 (TFRNIPRGRNTKDTHSGPVQLTQTSTEDWHQRRHR) are disordered. Residues 151–160 (GPVQLTQTST) are compositionally biased toward polar residues.

It belongs to the CEP43 family. As to quaternary structure, homooligomer; probably required for localization to centrosomes.

It is found in the cell projection. The protein localises to the cilium. It localises to the cytoplasm. The protein resides in the cytoskeleton. Its subcellular location is the cilium basal body. It is found in the microtubule organizing center. The protein localises to the centrosome. It localises to the cytoplasmic granule. The protein resides in the centriolar satellite. Involved in the biogenesis of cilia. Required for the recruitment of PLK1 to centrosomes and S phase progression. This chain is Centrosomal protein 20 (Cep20), found in Xenopus laevis (African clawed frog).